The following is a 322-amino-acid chain: MSPNFKLQCHFTLILLTALRGESRYLEVQEAAVYDPFLLFSANLKRNLAEEQPYRRALRCLDMLSLPGQFTFTADQPQLHCAAFFIGEPEEFITIHFDLVSIDCQGGDFLKVFDGWILKGEKFPSSQDHPLPTRERYTDFCESGLTRRSVTSSQNVAMVFFRVHEPGNGFTITIKTDPNLFPCNIISQTPSGRFALVVPYQHQNCSFSIIYPVTIKISDLALGHLHGLQLKKPAAGCGGTGDFVELLGGTGLDTSKMMLLVDLCYPFHGPAQMKISCDNAVVRMVSSGKHMNRVTFEYRQLEPLELETSTRNSIPEYCLSSL.

An N-terminal signal peptide occupies residues 1–24 (MSPNFKLQCHFTLILLTALRGESR). 5 disulfide bridges follow: cysteine 60–cysteine 81, cysteine 104–cysteine 141, cysteine 183–cysteine 205, cysteine 237–cysteine 264, and cysteine 277–cysteine 318. Residue asparagine 204 is glycosylated (N-linked (GlcNAc...) asparagine).

Belongs to the CRF-binding protein family.

It is found in the secreted. Its function is as follows. Binds CRF and inactivates it. May prevent inappropriate pituitary-adrenal stimulation in pregnancy. The chain is Corticotropin-releasing factor-binding protein (Crhbp) from Rattus norvegicus (Rat).